Consider the following 255-residue polypeptide: 4-hydroxy-tetrahydrodipicolinate reductase (255 aa).

Residues 9 to 14 (GFKGRM), 89 to 91 (GTT), and 115 to 118 (APNF) contribute to the NAD(+) site. The Proton donor/acceptor role is filled by H145. A (S)-2,3,4,5-tetrahydrodipicolinate-binding site is contributed by H146. K149 serves as the catalytic Proton donor. Residue 155–156 (GT) coordinates (S)-2,3,4,5-tetrahydrodipicolinate.

It belongs to the DapB family.

Its subcellular location is the cytoplasm. The catalysed reaction is (S)-2,3,4,5-tetrahydrodipicolinate + NAD(+) + H2O = (2S,4S)-4-hydroxy-2,3,4,5-tetrahydrodipicolinate + NADH + H(+). It carries out the reaction (S)-2,3,4,5-tetrahydrodipicolinate + NADP(+) + H2O = (2S,4S)-4-hydroxy-2,3,4,5-tetrahydrodipicolinate + NADPH + H(+). The protein operates within amino-acid biosynthesis; L-lysine biosynthesis via DAP pathway; (S)-tetrahydrodipicolinate from L-aspartate: step 4/4. Catalyzes the conversion of 4-hydroxy-tetrahydrodipicolinate (HTPA) to tetrahydrodipicolinate. The chain is 4-hydroxy-tetrahydrodipicolinate reductase from Streptococcus mutans serotype c (strain ATCC 700610 / UA159).